The chain runs to 354 residues: MAPARRPAGARLLLVYAGLLAAAAAGLGSPEPGAPSRSRARREPPPGNELPRGPGESRAGPAARPPEPTAERAHSVDPRDAWMLFVRQSDKGVNGKKRSRGKAKKLKFGLPGPPGPPGPQGPPGPIIPPEALLKEFQLLLKGAVRQRERAEPEPCTCGPAGPVAASLAPVSATAGEDDDDVVGDVLALLAAPLAPGPRAPRVEAAFLCRLRRDALVERRALHELGVYYLPDAEGAFRRGPGLNLTSGQYRAPVAGFYALAATLHVALGEPPRRGPPRPRDHLRLLICIQSRCQRNASLEAIMGLESSSELFTISVNGVLYLQMGQWTSVFLDNASGCSLTVRSGSHFSAVLLGV.

The signal sequence occupies residues 1 to 28 (MAPARRPAGARLLLVYAGLLAAAAAGLG). Low complexity-rich tracts occupy residues 26–37 (GLGSPEPGAPSR) and 51–62 (PRGPGESRAGPA). The tract at residues 26-123 (GLGSPEPGAP…PGPPGPQGPP (98 aa)) is disordered. Over residues 69-80 (TAERAHSVDPRD) the composition is skewed to basic and acidic residues. Over residues 94–107 (NGKKRSRGKAKKLK) the composition is skewed to basic residues. A hydroxyproline mark is found at proline 111, proline 113, proline 114, proline 116, proline 117, and proline 119. Pro residues predominate over residues 111–123 (PGPPGPPGPQGPP). In terms of domain architecture, C1q spans 199-354 (APRVEAAFLC…SHFSAVLLGV (156 aa)). 3 N-linked (GlcNAc...) asparagine glycosylation sites follow: asparagine 243, asparagine 295, and asparagine 333.

It belongs to the adipolin/erythroferrone family. In terms of assembly, homodimer; disulfide-linked. Forms trimer, hexamers and higher molecular weight oligomers. May form heteromeric complexes with C1QTNF2 and C1QTNF12 and, to a lesser extent, with C1QTNF5 and C1QTNF10. Interacts with BMP5 and BMP7; the interaction inhibits BMP-induced transcription of HAMP. Interacts with BMP6; the interaction inhibits BMP-induced transcription of HAMP. Interacts with BMP2. Interacts with heterodimers composed of BMP2 and BMP6 in vitro, the interaction inhibits the heterodimer binding to its receptor BMPR1A /ALK3 and thereby suppresses expression of HAMP. In terms of processing, N-glycosylated; required for secretion of the mature protein.

It localises to the secreted. Iron-regulatory hormone that acts as an erythroid regulator after hemorrhage: produced by erythroblasts following blood loss and mediates suppression of hepcidin (HAMP) expression in the liver, thereby promoting increased iron absorption and mobilization from stores. Promotes lipid uptake into adipocytes and hepatocytes via transcriptional up-regulation of genes involved in fatty acid uptake. Inhibits apoptosis and inflammatory response in cardiomyocytes via promotion of sphingosine-1-phosphate (S1P) and cAMP-dependent activation of AKT signaling. Inhibits autophagy induced by nutrient deficiency in hepatocytes via promoting the phosphorylation of IRS1, AKT, and MTOR, and thereby subsequent activation of the AKT-MTOR signaling pathway. Negatively regulates the differentiation of osteoblasts, potentially via sequestering BMP2, and thereby inhibits the activation of SMAD signaling. The reduction in BMP2 signaling in osteoblasts also results in an increase in expression of the osteoclastogenesis-promoting factors TNFSF11/RANKL and SOST, thereby indirectly promotes bone resorption. In Homo sapiens (Human), this protein is Erythroferrone.